The following is a 349-amino-acid chain: Transcription repressor OFP5 (349 aa).

3 disordered regions span residues 1–20 (MMRW…GLSR), 29–94 (KLSG…KESN), and 143–183 (KQRC…GYSR). The segment covering 10–20 (VSSSSSSGLSR) has biased composition (low complexity). Positions 37 to 48 (KPAKEKKQDEKA) are enriched in basic and acidic residues. A compositionally biased stretch (polar residues) spans 49 to 62 (SQNISVKTSLSSTT). Composition is skewed to basic and acidic residues over residues 63–94 (RRSD…KESN) and 143–167 (KQRC…DAGV). One can recognise an OVATE domain in the interval 286–345 (VVKCSSDPQKDFRDSMIEMIMENGINHPEELKELLVCYLRLNTDEYHDMIISVFQQVHND).

As to quaternary structure, interacts with BLH1, BLH2, BLH3, BLH4, BLH6 and BLH10. As to expression, expressed in roots, rosette and cauline leaves, and flower buds.

It is found in the nucleus. In terms of biological role, transcriptional repressor that regulates multiple aspects of plant growth and development through the regulation of BEL1-LIKE (BLH) and KNOX TALE (KNAT) homeodomain transcription factors. Required for embryo development. In Arabidopsis thaliana (Mouse-ear cress), this protein is Transcription repressor OFP5 (OFP5).